A 209-amino-acid polypeptide reads, in one-letter code: Ion-translocating oxidoreductase complex subunit G (209 aa).

The helical transmembrane segment at 9-29 (GITLALFAAGATGLTAVVNSL) threads the bilayer. Thr-175 carries the FMN phosphoryl threonine modification.

The protein belongs to the RnfG family. As to quaternary structure, the complex is composed of six subunits: RnfA, RnfB, RnfC, RnfD, RnfE and RnfG. FMN is required as a cofactor.

It is found in the cell inner membrane. Its function is as follows. Part of a membrane-bound complex that couples electron transfer with translocation of ions across the membrane. This chain is Ion-translocating oxidoreductase complex subunit G, found in Yersinia pestis.